The primary structure comprises 473 residues: MAAKTYDAGVKDYRSIYWEPQYQVKDSDILAVFKVVPQPGVSREEAAAAVAAESSTATWTTVWTDLLTDLDYYKGRAYAIEDVPGSDEAFYAFIAYPMDLFEEGSVVNVFTSLVGNVFGFKAVRALRLEDVRFPLWFVMTCPGAPHGMKVERDLLDKYGRPLLGCTIKPKLGLAAKNYGRAVYECLRGGLDFTKDDENVNSQPFLRWRDRFLFCQEAIQKAEAETGERKGHYMNVTAGTMEEIYERAEFAKEIGTPIIMSDYLTVGWAAHTSLSRWCRKNGMLLHVHRAMHAVMDRNPNHGINFRVLAKILRLMGGDHLHSGTVVGKLEGDREATIGWINLLRDRFIKADRSRGIFFDQDWGPQPGLFPVASGGIHVWHMPALVSIFGNDSVLQFGGGTLGHPWGNAAGACANRVALEACVQARNEGRHLEKEGKEILTKAAQSSPELRMAMETWKEIKFEFDTVDKLDVQHR.

Substrate is bound by residues Asn116 and Thr166. Catalysis depends on Lys168, which acts as the Proton acceptor. Residue Lys170 participates in substrate binding. 3 residues coordinate Mg(2+): Lys194, Asp196, and Glu197. N6-carboxylysine is present on Lys194. His287 functions as the Proton acceptor in the catalytic mechanism. Substrate is bound by residues Arg288, His320, and Ser372.

The protein belongs to the RuBisCO large chain family. Type I subfamily. In terms of assembly, heterohexadecamer of 8 large chains and 8 small chains. Mg(2+) is required as a cofactor.

It carries out the reaction 2 (2R)-3-phosphoglycerate + 2 H(+) = D-ribulose 1,5-bisphosphate + CO2 + H2O. The enzyme catalyses D-ribulose 1,5-bisphosphate + O2 = 2-phosphoglycolate + (2R)-3-phosphoglycerate + 2 H(+). Its function is as follows. RuBisCO catalyzes two reactions: the carboxylation of D-ribulose 1,5-bisphosphate, the primary event in carbon dioxide fixation, as well as the oxidative fragmentation of the pentose substrate. Both reactions occur simultaneously and in competition at the same active site. In Rhodobacter capsulatus (strain ATCC BAA-309 / NBRC 16581 / SB1003), this protein is Ribulose bisphosphate carboxylase large chain.